Reading from the N-terminus, the 147-residue chain is MKKNVALDKALKEILNEEGASTQEEICEKLSSLGIATTQSSVSRWLKKVHAIKIPGDKGARYSLPPSIDDSSIKHLVFSIRHNSSLIVIRTAPGSASWIASLIDNKFAESILGTLAGDDTIFITPITESTISLTAKDIENFLLVFSE.

This sequence belongs to the ArgR family.

The protein resides in the cytoplasm. The protein operates within amino-acid biosynthesis; L-arginine biosynthesis [regulation]. In terms of biological role, regulates arginine biosynthesis genes. In Chlamydia caviae (strain ATCC VR-813 / DSM 19441 / 03DC25 / GPIC) (Chlamydophila caviae), this protein is Arginine repressor.